The sequence spans 295 residues: Cyclin-G1 (295 aa).

The protein belongs to the cyclin family. Cyclin G subfamily.

The protein resides in the nucleus. Functionally, may play a role in growth regulation. Is associated with G2/M phase arrest in response to DNA damage. May be an intermediate by which p53 mediates its role as an inhibitor of cellular proliferation. This chain is Cyclin-G1 (CCNG1), found in Sus scrofa (Pig).